The chain runs to 232 residues: Ribose-5-phosphate isomerase A (232 aa).

Residues 28-31 (TGST), 83-86 (DGAD), and 96-99 (KGGG) contribute to the substrate site. The active-site Proton acceptor is E105. Residue K123 participates in substrate binding.

Belongs to the ribose 5-phosphate isomerase family. In terms of assembly, homodimer.

It catalyses the reaction aldehydo-D-ribose 5-phosphate = D-ribulose 5-phosphate. Its pathway is carbohydrate degradation; pentose phosphate pathway; D-ribose 5-phosphate from D-ribulose 5-phosphate (non-oxidative stage): step 1/1. In terms of biological role, catalyzes the reversible conversion of ribose-5-phosphate to ribulose 5-phosphate. The polypeptide is Ribose-5-phosphate isomerase A (Rhizobium etli (strain CIAT 652)).